We begin with the raw amino-acid sequence, 506 residues long: Exoglucanase (506 aa).

A signal peptide spans 1–18; sequence MFPRSILLALSLTAVALG. The interval 19–450 is catalytic; that stretch reads QQVGTNMAEN…IKFGDINSTF (432 aa). E227 (nucleophile) is an active-site residue. E232 (proton donor) is an active-site residue. An N-linked (GlcNAc...) asparagine glycan is attached at N308. Positions 405-426 are disordered; that stretch reads ASPSQPGISRGTCSRDSGKPED. A compositionally biased stretch (polar residues) spans 406-419; the sequence is SPSQPGISRGTCSR. Residue N447 is glycosylated (N-linked (GlcNAc...) asparagine). Residues 449-472 are disordered; the sequence is TFNNNGGGGGNPSPTTTRPNSPAQ. Residues 451-473 form a linker region; the sequence is NNNGGGGGNPSPTTTRPNSPAQT. Residues 460-470 show a composition bias toward low complexity; that stretch reads PSPTTTRPNSP. A CBM1 domain is found at 470–506; it reads PAQTMWGQCGGQGWTGPTACQSPSTCHVINDFYSQCF. 2 cysteine pairs are disulfide-bonded: C478–C495 and C489–C505.

This sequence belongs to the glycosyl hydrolase 7 (cellulase C) family.

It carries out the reaction Hydrolysis of (1-&gt;4)-beta-D-glucosidic linkages in cellulose and cellotetraose, releasing cellobiose from the non-reducing ends of the chains.. The biological conversion of cellulose to glucose generally requires three types of hydrolytic enzymes: (1) Endoglucanases which cut internal beta-1,4-glucosidic bonds; (2) Exocellobiohydrolases that cut the disaccharide cellobiose from the non-reducing end of the cellulose polymer chain; (3) Beta-1,4-glucosidases which hydrolyze the cellobiose and other short cello-oligosaccharides to glucose. The protein is Exoglucanase (cel2) of Agaricus bisporus (White button mushroom).